Reading from the N-terminus, the 311-residue chain is Methionyl-tRNA formyltransferase (311 aa).

110-113 (SLLP) provides a ligand contact to (6S)-5,6,7,8-tetrahydrofolate.

It belongs to the Fmt family.

The catalysed reaction is L-methionyl-tRNA(fMet) + (6R)-10-formyltetrahydrofolate = N-formyl-L-methionyl-tRNA(fMet) + (6S)-5,6,7,8-tetrahydrofolate + H(+). Attaches a formyl group to the free amino group of methionyl-tRNA(fMet). The formyl group appears to play a dual role in the initiator identity of N-formylmethionyl-tRNA by promoting its recognition by IF2 and preventing the misappropriation of this tRNA by the elongation apparatus. The polypeptide is Methionyl-tRNA formyltransferase (Streptococcus pyogenes serotype M12 (strain MGAS2096)).